The following is a 254-amino-acid chain: Probable transcriptional regulatory protein MAE_13580 (254 aa).

It belongs to the TACO1 family.

It is found in the cytoplasm. In Microcystis aeruginosa (strain NIES-843 / IAM M-2473), this protein is Probable transcriptional regulatory protein MAE_13580.